The sequence spans 140 residues: MRHRTIVCPLIENKGHYLLCKMAADRGVFPGQWALSGGVEPGERIEEALRREIREELGEKLILTHIAPWCFRDDTRVKTYPDGHQETIYMIYLIFNCVSANRDVTINEEFDDYAWVKAEDLKNYDLNAATRVTLSLKGLL.

The 140-residue stretch at 1–140 (MRHRTIVCPL…RVTLSLKGLL (140 aa)) folds into the Nudix hydrolase domain. Residues 38–58 (GVEPGERIEEALRREIREELG) carry the Nudix box motif.

This sequence belongs to the Nudix hydrolase family. NudI subfamily. As to quaternary structure, monomer. Mg(2+) serves as cofactor.

The catalysed reaction is a ribonucleoside 5'-triphosphate + H2O = a ribonucleoside 5'-phosphate + diphosphate + H(+). It catalyses the reaction a 2'-deoxyribonucleoside 5'-triphosphate + H2O = a 2'-deoxyribonucleoside 5'-phosphate + diphosphate + H(+). The enzyme catalyses dUTP + H2O = dUMP + diphosphate + H(+). It carries out the reaction dTTP + H2O = dTMP + diphosphate + H(+). The catalysed reaction is dCTP + H2O = dCMP + diphosphate + H(+). Functionally, catalyzes the hydrolysis of nucleoside triphosphates, with a preference for pyrimidine deoxynucleoside triphosphates (dUTP, dTTP and dCTP). This chain is Nucleoside triphosphatase NudI, found in Klebsiella pneumoniae subsp. pneumoniae (strain ATCC 700721 / MGH 78578).